A 419-amino-acid polypeptide reads, in one-letter code: UDP-N-acetylglucosamine 1-carboxyvinyltransferase 2 (419 aa).

22-23 is a phosphoenolpyruvate binding site; it reads KN. Arginine 92 lines the UDP-N-acetyl-alpha-D-glucosamine pocket. The Proton donor role is filled by cysteine 116. Cysteine 116 carries the 2-(S-cysteinyl)pyruvic acid O-phosphothioketal modification. Residues 121–125, aspartate 306, and isoleucine 328 each bind UDP-N-acetyl-alpha-D-glucosamine; that span reads RPIDL.

The protein belongs to the EPSP synthase family. MurA subfamily.

The protein resides in the cytoplasm. The enzyme catalyses phosphoenolpyruvate + UDP-N-acetyl-alpha-D-glucosamine = UDP-N-acetyl-3-O-(1-carboxyvinyl)-alpha-D-glucosamine + phosphate. It functions in the pathway cell wall biogenesis; peptidoglycan biosynthesis. Its function is as follows. Cell wall formation. Adds enolpyruvyl to UDP-N-acetylglucosamine. This Streptococcus mutans serotype c (strain ATCC 700610 / UA159) protein is UDP-N-acetylglucosamine 1-carboxyvinyltransferase 2.